The sequence spans 363 residues: tRNA/tmRNA (uracil-C(5))-methyltransferase (363 aa).

S-adenosyl-L-methionine contacts are provided by glutamine 187, tyrosine 215, asparagine 220, glutamate 236, and aspartate 296. Catalysis depends on cysteine 321, which acts as the Nucleophile. The active-site Proton acceptor is the glutamate 355.

It belongs to the class I-like SAM-binding methyltransferase superfamily. RNA M5U methyltransferase family. TrmA subfamily.

It carries out the reaction uridine(54) in tRNA + S-adenosyl-L-methionine = 5-methyluridine(54) in tRNA + S-adenosyl-L-homocysteine + H(+). The enzyme catalyses uridine(341) in tmRNA + S-adenosyl-L-methionine = 5-methyluridine(341) in tmRNA + S-adenosyl-L-homocysteine + H(+). Its function is as follows. Dual-specificity methyltransferase that catalyzes the formation of 5-methyluridine at position 54 (m5U54) in all tRNAs, and that of position 341 (m5U341) in tmRNA (transfer-mRNA). The sequence is that of tRNA/tmRNA (uracil-C(5))-methyltransferase from Haemophilus influenzae (strain 86-028NP).